The following is a 68-amino-acid chain: Large ribosomal subunit protein uL30 (68 aa).

Belongs to the universal ribosomal protein uL30 family. Part of the 50S ribosomal subunit.

This Bartonella henselae (strain ATCC 49882 / DSM 28221 / CCUG 30454 / Houston 1) (Rochalimaea henselae) protein is Large ribosomal subunit protein uL30.